The primary structure comprises 343 residues: Probable fructokinase-7 (343 aa).

Gly2 is subject to N-acetylglycine.

It belongs to the carbohydrate kinase PfkB family.

The enzyme catalyses D-fructose + ATP = D-fructose 6-phosphate + ADP + H(+). It participates in glycan biosynthesis; starch biosynthesis. In terms of biological role, may play an important role in maintaining the flux of carbon towards starch formation. The polypeptide is Probable fructokinase-7 (Arabidopsis thaliana (Mouse-ear cress)).